The following is a 581-amino-acid chain: Estrogen receptor (581 aa).

The interval 1-144 is modulating; it reads MYPEDSRVSG…GFEMAKEMRF (144 aa). 2 disordered regions span residues 45–66 and 99–123; these read APLD…SGPN and RSSV…DSYS. Residues 56-66 show a composition bias toward polar residues; the sequence is GSLQSLGSGPN. A DNA-binding region (nuclear receptor) is located at residues 142–217; it reads MRFCAVCSDY…VGMMKGGVRK (76 aa). 2 NR C4-type zinc fingers span residues 145-165 and 181-200; these read CAVC…CEGC and CPAT…CQAC. Residues 211–272 form a hinge region; that stretch reads MKGGVRKDRG…GGGKSSVISM (62 aa). Positions 216 to 246 are enriched in basic and acidic residues; that stretch reads RKDRGRVLRRDKRRTGTSDRDKASKGLEHRT. Residues 216–269 form a disordered region; sequence RKDRGRVLRRDKRRTGTSDRDKASKGLEHRTAPPQDRRKHISSSAGGGGGKSSV. One can recognise an NR LBD domain in the interval 273–509; it reads PPDQVLLLLR…DLLLEMLDAH (237 aa). The span at 514–528 shows a compositional bias: basic and acidic residues; sequence PDRPAETWSQADREP. Positions 514-581 are disordered; sequence PDRPAETWSQ…VHPHPMKPTE (68 aa). The span at 572–581 shows a compositional bias: basic residues; the sequence is VHPHPMKPTE.

It belongs to the nuclear hormone receptor family. NR3 subfamily. In terms of assembly, binds DNA as a homodimer. Can form a heterodimer with ER-beta.

It localises to the nucleus. In terms of biological role, the steroid hormones and their receptors are involved in the regulation of eukaryotic gene expression and affect cellular proliferation and differentiation in target tissues. The sequence is that of Estrogen receptor (esr1) from Sparus aurata (Gilthead sea bream).